A 70-amino-acid polypeptide reads, in one-letter code: U2-agatoxin-Ao1b (70 aa).

A signal peptide spans 1–20 (MRAIISLILISAMVFSMIAA). Positions 21–34 (VPEEEGLQLSEDER) are excised as a propeptide. 3 disulfides stabilise this stretch: cysteine 37/cysteine 53, cysteine 44/cysteine 58, and cysteine 52/cysteine 68. Leucine 69 is modified (leucine amide).

This sequence belongs to the neurotoxin 01 (U2-agtx) family. In terms of tissue distribution, expressed by the venom gland.

The protein resides in the secreted. In terms of biological role, insect active toxin causing rapid but reversible paralysis in crickets. No activity shown in mammals. Does not show effect on mammalian voltage-gated calcium channels. This is U2-agatoxin-Ao1b from Agelena orientalis (Funnel-web spider).